We begin with the raw amino-acid sequence, 275 residues long: Large ribosomal subunit protein uL2 (275 aa).

Positions 223-275 (VAMNPVDHPHGGGEGRTSGGRHPVSPWGQPTKGYKTRSNKRTDKYIVRRRNKK) are disordered.

The protein belongs to the universal ribosomal protein uL2 family. In terms of assembly, part of the 50S ribosomal subunit. Forms a bridge to the 30S subunit in the 70S ribosome.

One of the primary rRNA binding proteins. Required for association of the 30S and 50S subunits to form the 70S ribosome, for tRNA binding and peptide bond formation. It has been suggested to have peptidyltransferase activity; this is somewhat controversial. Makes several contacts with the 16S rRNA in the 70S ribosome. The polypeptide is Large ribosomal subunit protein uL2 (Shewanella pealeana (strain ATCC 700345 / ANG-SQ1)).